Reading from the N-terminus, the 84-residue chain is Hirudin-HM2 (84 aa).

The signal sequence occupies residues Met1–Ala20. The tract at residues Val21–Tyr23 is interaction with thrombin active site. Cystine bridges form between Cys26-Cys34, Cys36-Cys48, and Cys42-Cys57. The interval Ser53–Asn84 is disordered. Thr63 carries an O-linked (GalNAc...) threonine glycan. Positions Gly72–Asn84 are enriched in acidic residues. The tract at residues Asp73–Asn84 is interaction with fibrinogen-binding exosite of thrombin.

This sequence belongs to the protease inhibitor I14 (hirudin) family.

It is found in the secreted. Functionally, hirudin is a potent thrombin-specific protease inhibitor. It forms a stable non-covalent complex with alpha-thrombin, thereby abolishing its ability to cleave fibrinogen. This is Hirudin-HM2 from Hirudinaria manillensis (Asian medical leech).